The primary structure comprises 640 residues: SH3 domain-containing protein 21 (640 aa).

Residues 1-60 are disordered; the sequence is MVQSELQLQPRAGGRAEAASWGDRGNDKGGLGNPDMPSVSPGPQRPPKLSSLAYDSPPDY. The SH3 domain occupies 65-126; the sequence is SHPEVYRVLF…PDNFVLPPPP (62 aa). Disordered stretches follow at residues 133 to 361, 401 to 551, and 618 to 640; these read RKVV…PLGD, YFVA…PDSQ, and VQVM…TQTY. The segment covering 177–186 has biased composition (basic and acidic residues); that stretch reads PSRDSQKLTS. Over residues 210 to 220 the composition is skewed to polar residues; it reads TQTPQQRSVSS. 3 stretches are compositionally biased toward basic and acidic residues: residues 401–416, 459–469, and 494–532; these read YFVA…EAHT, ALEKPHPHEEA, and RPLR…EVPP. Positions 572 to 626 form a coiled coil; that stretch reads VDVTSLRGEVESLRRALELMEVQLERKLTDIWEELKSEKEQRRRLEVQVMQGTQK. Over residues 621-640 the composition is skewed to polar residues; sequence MQGTQKSQTPRVIHTQTQTY.

The chain is SH3 domain-containing protein 21 (SH3D21) from Homo sapiens (Human).